Reading from the N-terminus, the 668-residue chain is Lebercilin-like protein (668 aa).

The segment at 17–44 (SVALENNRRSAECKRSPGTGDFSRNSSA) is disordered. Basic and acidic residues predominate over residues 22–31 (NNRRSAECKR). Coiled-coil stretches lie at residues 148–259 (LHKI…EREE) and 305–336 (AAQT…IKNI). The segment at 351 to 402 (YPKVSSTKSVQADRKSLPFTSMRHQGTQKSDVPPLTTKGKKATGNMNHKEKS) is disordered. Polar residues predominate over residues 368-380 (PFTSMRHQGTQKS). Residues 420 to 440 (EDSKTKYEDLSREEKHLEVQV) adopt a coiled-coil conformation. Disordered regions lie at residues 495 to 520 (RSMQ…PLRQ), 533 to 581 (LHHG…FGKS), and 605 to 668 (SGYV…KIII). Positions 546 to 558 (AGNTKYSHSTSKH) are enriched in polar residues. 2 stretches are compositionally biased toward basic and acidic residues: residues 560 to 572 (SNRE…HSDS) and 621 to 632 (GSEEPLQSKESH). The span at 633–660 (PPSQASASNAFGDSKVTVVNSIKPSSPT) shows a compositional bias: polar residues.

The protein belongs to the LCA5 family.

The chain is Lebercilin-like protein from Macaca fascicularis (Crab-eating macaque).